The following is a 109-amino-acid chain: Translation initiation factor IF-1, chloroplastic (109 aa).

Positions 18–93 (KSLNQEKENL…TRGRIIYRLK (76 aa)) constitute an S1-like domain.

The protein belongs to the IF-1 family. In terms of assembly, component of the 30S ribosomal translation pre-initiation complex which assembles on the 30S ribosome in the order IF-2 and IF-3, IF-1 and N-formylmethionyl-tRNA(fMet); mRNA recruitment can occur at any time during PIC assembly.

The protein resides in the plastid. It localises to the chloroplast. In terms of biological role, one of the essential components for the initiation of protein synthesis. Stabilizes the binding of IF-2 and IF-3 on the 30S subunit to which N-formylmethionyl-tRNA(fMet) subsequently binds. Helps modulate mRNA selection, yielding the 30S pre-initiation complex (PIC). Upon addition of the 50S ribosomal subunit IF-1, IF-2 and IF-3 are released leaving the mature 70S translation initiation complex. This Tupiella akineta (Green alga) protein is Translation initiation factor IF-1, chloroplastic.